The primary structure comprises 1227 residues: Splicing factor 3B subunit 3 (1227 aa).

It belongs to the RSE1 family. In terms of assembly, identified in the spliceosome A complex; remains associated with the spliceosome throughout the splicing process. Component of the spliceosome B complex. Identified in the spliceosome C complex. Identified in the spliceosome E complex. Component of the U11/U12 snRNPs that are part of the U12-type spliceosome. Component of splicing factor SF3B complex. Identified in the SAGA transcription regulatory histone acetylation (HAT) complex; the interaction is RNA-independent.

The protein resides in the nucleus. Involved in pre-mRNA splicing as a component of the splicing factor SF3B complex, a constituent of the spliceosome. SF3B complex is required for 'A' complex assembly formed by the stable binding of U2 snRNP to the branchpoint sequence (BPS) in pre-mRNA. Sequence independent binding of SF3A/SF3B complex upstream of the branch site is essential, it may anchor U2 snRNP to the pre-mRNA. May also be involved in the assembly of the 'E' complex. Also belongs to the minor U12-dependent spliceosome, which is involved in the splicing of rare class of nuclear pre-mRNA intron. This Drosophila melanogaster (Fruit fly) protein is Splicing factor 3B subunit 3.